The sequence spans 266 residues: Phosphatidylglycerol--prolipoprotein diacylglyceryl transferase (266 aa).

7 helical membrane passes run 19 to 39, 61 to 81, 91 to 111, 125 to 145, 176 to 196, 204 to 224, and 237 to 257; these read IWGP…FAFA, LMFW…TLFY, LYLF…LGVI, FLQV…FGRI, PSQL…ILWF, GAVS…VEFF, and GMSM…ILMV. Arginine 144 serves as a coordination point for a 1,2-diacyl-sn-glycero-3-phospho-(1'-sn-glycerol).

It belongs to the Lgt family.

The protein resides in the cell inner membrane. It carries out the reaction L-cysteinyl-[prolipoprotein] + a 1,2-diacyl-sn-glycero-3-phospho-(1'-sn-glycerol) = an S-1,2-diacyl-sn-glyceryl-L-cysteinyl-[prolipoprotein] + sn-glycerol 1-phosphate + H(+). It functions in the pathway protein modification; lipoprotein biosynthesis (diacylglyceryl transfer). Catalyzes the transfer of the diacylglyceryl group from phosphatidylglycerol to the sulfhydryl group of the N-terminal cysteine of a prolipoprotein, the first step in the formation of mature lipoproteins. The protein is Phosphatidylglycerol--prolipoprotein diacylglyceryl transferase of Idiomarina loihiensis (strain ATCC BAA-735 / DSM 15497 / L2-TR).